The primary structure comprises 712 residues: Polyribonucleotide nucleotidyltransferase (712 aa).

Residues Asp-487 and Asp-493 each contribute to the Mg(2+) site. Residues 554 to 613 (PKIITMTINPDKIRDVIGPSGKQINKIIEETGVKIDIEQDGTVFISSINQEMNDKAKKII) enclose the KH domain. Positions 623-691 (GEIYEGKVKR…KQGRVNLSRK (69 aa)) constitute an S1 motif domain.

This sequence belongs to the polyribonucleotide nucleotidyltransferase family. The cofactor is Mg(2+).

The protein resides in the cytoplasm. It catalyses the reaction RNA(n+1) + phosphate = RNA(n) + a ribonucleoside 5'-diphosphate. Its function is as follows. Involved in mRNA degradation. Catalyzes the phosphorolysis of single-stranded polyribonucleotides processively in the 3'- to 5'-direction. The chain is Polyribonucleotide nucleotidyltransferase from Bacillus cereus (strain 03BB102).